The primary structure comprises 85 residues: Conotoxin Mi15b (85 aa).

Positions 1–23 are cleaved as a signal peptide; that stretch reads MEKLTVLILVAIVLLTIQVLGQS. Positions 24-49 are excised as a propeptide; the sequence is DRDKHPKRRPRQYATKRLSALMKGHR. Gln-50 carries the pyrrolidone carboxylic acid modification.

Belongs to the conotoxin O2 superfamily. In terms of processing, contains 4 disulfide bonds. Expressed by the venom duct.

Its subcellular location is the secreted. This is Conotoxin Mi15b from Conus miles (Soldier cone).